The chain runs to 633 residues: DNA mismatch repair protein MutL (633 aa).

Disordered stretches follow at residues 337–364 (RPDDQLAPPGATSLTEPRPTGAAAGEFG) and 383–405 (VGWSGGSSASGGSSGYSAYTRPE). Positions 385–396 (WSGGSSASGGSS) are enriched in gly residues.

Belongs to the DNA mismatch repair MutL/HexB family.

Its function is as follows. This protein is involved in the repair of mismatches in DNA. It is required for dam-dependent methyl-directed DNA mismatch repair. May act as a 'molecular matchmaker', a protein that promotes the formation of a stable complex between two or more DNA-binding proteins in an ATP-dependent manner without itself being part of a final effector complex. In Pseudomonas aeruginosa (strain UCBPP-PA14), this protein is DNA mismatch repair protein MutL.